The primary structure comprises 396 residues: Calcium-responsive transactivator (396 aa).

The N-terminal auto-inhibitory domain; necessary for interaction with SMARCA4/BRG1 stretch occupies residues 1–148 (MSVAFASARP…TLPTTSMSIS (148 aa)). The SH2-binding motif lies at 50–53 (YQQI). Disordered regions lie at residues 72-162 (QSLL…SQGV), 192-280 (QAAT…GDYA), and 311-396 (SQQQ…NYQQ). Positions 90-106 (LTQSGSSQGLHSQGSLS) are enriched in low complexity. 2 stretches are compositionally biased toward polar residues: residues 107-122 (DAIS…LQGQ) and 128-147 (SHVS…SMSI). Residues 149-232 (GPGYSHAGPA…GSSMMGQRPM (84 aa)) are methionine-rich intra-molecular domain. 3 stretches are compositionally biased toward low complexity: residues 199–229 (SSAQ…MMGQ), 238–261 (SQQG…SHSQ), and 311–369 (SQQQ…YGSY). An MFD domain region spans residues 246-317 (YLGQEEYYGE…SQYSQQQAGY (72 aa)). Residues 334-396 (SQQSYPGQQQ…EQGQYGNYQQ (63 aa)) form a necessary for nuclear localization region. Residues 353–356 (SQYP) carry the SH2-binding motif. An SH3-binding motif is present at residues 371–379 (APQTAPSAQ). A compositionally biased stretch (low complexity) spans 384–396 (YGYEQGQYGNYQQ). Positions 387 to 396 (EQGQYGNYQQ) are necessary for interaction with CREBBP and for the recruitment of CREBBP to the nuclear bodies. An SH2-binding motif is present at residues 391 to 394 (YGNY).

Belongs to the SS18 family. As to quaternary structure, homodimer. Dimerization may be necessary for its function in neuronal dendritic development. Interacts (via C-terminus) with CREBBP (via N-terminus), EP300 and SMARCA4/BRG1. Interacts with the nBAF complex. Association with CREBBP facilitates transcription while the association with SMARCA4/BRG1 suppresses CREST-mediated transcription in resting neurons. In terms of tissue distribution, ubiquitous; with lowest levels in spleen.

It is found in the nucleus. It localises to the chromosome. The protein localises to the centromere. The protein resides in the kinetochore. In terms of biological role, transcriptional activator which is required for calcium-dependent dendritic growth and branching in cortical neurons. Recruits CREB-binding protein (CREBBP) to nuclear bodies. Component of the CREST-BRG1 complex, a multiprotein complex that regulates promoter activation by orchestrating a calcium-dependent release of a repressor complex and a recruitment of an activator complex. In resting neurons, transcription of the c-FOS promoter is inhibited by BRG1-dependent recruitment of a phospho-RB1-HDAC1 repressor complex. Upon calcium influx, RB1 is dephosphorylated by calcineurin, which leads to release of the repressor complex. At the same time, there is increased recruitment of CREBBP to the promoter by a CREST-dependent mechanism, which leads to transcriptional activation. The CREST-BRG1 complex also binds to the NR2B promoter, and activity-dependent induction of NR2B expression involves a release of HDAC1 and recruitment of CREBBP. This Homo sapiens (Human) protein is Calcium-responsive transactivator (SS18L1).